We begin with the raw amino-acid sequence, 673 residues long: UvrABC system protein B (673 aa).

In terms of domain architecture, Helicase ATP-binding spans 26 to 414 (ANFEAGLAKQ…AGEVTELVVR (389 aa)). ATP is bound at residue 39–46 (GVTGSGKT). A Beta-hairpin motif is present at residues 92–115 (YYDYYQPEAYVPSSDTFIEKDSSI). One can recognise a Helicase C-terminal domain in the interval 431 to 597 (QVDDLMSEVH…SVERPIADIM (167 aa)). 2 stretches are compositionally biased toward basic and acidic residues: residues 600 to 609 (ARDDAAEKKS) and 618 to 628 (HVAEETPDYRA). The segment at 600 to 628 (ARDDAAEKKSGKGRSKSRHVAEETPDYRA) is disordered. A UVR domain is found at 635-670 (AGKLKSLEQKMYQHAKDLEFEAAAQIRDQIQKLKAA).

This sequence belongs to the UvrB family. In terms of assembly, forms a heterotetramer with UvrA during the search for lesions. Interacts with UvrC in an incision complex.

Its subcellular location is the cytoplasm. In terms of biological role, the UvrABC repair system catalyzes the recognition and processing of DNA lesions. A damage recognition complex composed of 2 UvrA and 2 UvrB subunits scans DNA for abnormalities. Upon binding of the UvrA(2)B(2) complex to a putative damaged site, the DNA wraps around one UvrB monomer. DNA wrap is dependent on ATP binding by UvrB and probably causes local melting of the DNA helix, facilitating insertion of UvrB beta-hairpin between the DNA strands. Then UvrB probes one DNA strand for the presence of a lesion. If a lesion is found the UvrA subunits dissociate and the UvrB-DNA preincision complex is formed. This complex is subsequently bound by UvrC and the second UvrB is released. If no lesion is found, the DNA wraps around the other UvrB subunit that will check the other stand for damage. The sequence is that of UvrABC system protein B from Xanthomonas axonopodis pv. citri (strain 306).